The sequence spans 311 residues: NAD kinase (311 aa).

The Proton acceptor role is filled by Asp88. NAD(+) is bound by residues 88-89 (DG), 162-163 (NE), Arg190, Asp192, Val200, and 203-208 (TAHNLS).

It belongs to the NAD kinase family. A divalent metal cation is required as a cofactor.

The protein localises to the cytoplasm. It carries out the reaction NAD(+) + ATP = ADP + NADP(+) + H(+). Functionally, involved in the regulation of the intracellular balance of NAD and NADP, and is a key enzyme in the biosynthesis of NADP. Catalyzes specifically the phosphorylation on 2'-hydroxyl of the adenosine moiety of NAD to yield NADP. In Rhodopirellula baltica (strain DSM 10527 / NCIMB 13988 / SH1), this protein is NAD kinase.